A 185-amino-acid chain; its full sequence is Large ribosomal subunit protein uL5 (185 aa).

Belongs to the universal ribosomal protein uL5 family. As to quaternary structure, part of the 50S ribosomal subunit; part of the 5S rRNA/L5/L18/L25 subcomplex. Contacts the 5S rRNA and the P site tRNA. Forms a bridge to the 30S subunit in the 70S ribosome.

This is one of the proteins that bind and probably mediate the attachment of the 5S RNA into the large ribosomal subunit, where it forms part of the central protuberance. In the 70S ribosome it contacts protein S13 of the 30S subunit (bridge B1b), connecting the 2 subunits; this bridge is implicated in subunit movement. Contacts the P site tRNA; the 5S rRNA and some of its associated proteins might help stabilize positioning of ribosome-bound tRNAs. The protein is Large ribosomal subunit protein uL5 of Rhizobium etli (strain CIAT 652).